Consider the following 816-residue polypeptide: Lon protease (816 aa).

A Lon N-terminal domain is found at 27-221 (LPLLPIRDVV…KVNDLLAREH (195 aa)). Residue 372-379 (GPPGVGKT) coordinates ATP. The Lon proteolytic domain maps to 608–789 (KNEVGVVNGL…DEVLKLALEK (182 aa)). Active-site residues include Ser-695 and Lys-738. Residues 795–816 (PKGKAKPATPKVVVRPSKEISA) are disordered. Low complexity predominate over residues 800-809 (KPATPKVVVR).

Belongs to the peptidase S16 family. In terms of assembly, homohexamer. Organized in a ring with a central cavity.

The protein resides in the cytoplasm. The enzyme catalyses Hydrolysis of proteins in presence of ATP.. Functionally, ATP-dependent serine protease that mediates the selective degradation of mutant and abnormal proteins as well as certain short-lived regulatory proteins. Required for cellular homeostasis and for survival from DNA damage and developmental changes induced by stress. Degrades polypeptides processively to yield small peptide fragments that are 5 to 10 amino acids long. Binds to DNA in a double-stranded, site-specific manner. The protein is Lon protease of Trichlorobacter lovleyi (strain ATCC BAA-1151 / DSM 17278 / SZ) (Geobacter lovleyi).